The following is a 104-amino-acid chain: Large ribosomal subunit protein eL31 (104 aa).

It belongs to the eukaryotic ribosomal protein eL31 family.

The protein is Large ribosomal subunit protein eL31 (rpl31e) of Aeropyrum pernix (strain ATCC 700893 / DSM 11879 / JCM 9820 / NBRC 100138 / K1).